Reading from the N-terminus, the 391-residue chain is Ferrochelatase (391 aa).

Residues H196 and E281 each coordinate Fe cation.

This sequence belongs to the ferrochelatase family.

Its subcellular location is the cytoplasm. The enzyme catalyses heme b + 2 H(+) = protoporphyrin IX + Fe(2+). The protein operates within porphyrin-containing compound metabolism; protoheme biosynthesis; protoheme from protoporphyrin-IX: step 1/1. Its function is as follows. Catalyzes the ferrous insertion into protoporphyrin IX. This is Ferrochelatase from Parasynechococcus marenigrum (strain WH8102).